We begin with the raw amino-acid sequence, 235 residues long: Ribonuclease 3 (235 aa).

An RNase III domain is found at 7–131 (LSALEARIGH…IIGAVFLDGG (125 aa)). Glutamate 45 lines the Mg(2+) pocket. The active site involves aspartate 49. Positions 117 and 120 each coordinate Mg(2+). The active site involves glutamate 120. The 70-residue stretch at 156-225 (DPKTTLQEWA…AAAFLTREKI (70 aa)) folds into the DRBM domain.

The protein belongs to the ribonuclease III family. Homodimer. The cofactor is Mg(2+).

It localises to the cytoplasm. It catalyses the reaction Endonucleolytic cleavage to 5'-phosphomonoester.. Digests double-stranded RNA. Involved in the processing of primary rRNA transcript to yield the immediate precursors to the large and small rRNAs (23S and 16S). Processes some mRNAs, and tRNAs when they are encoded in the rRNA operon. Processes pre-crRNA and tracrRNA of type II CRISPR loci if present in the organism. This is Ribonuclease 3 from Methylocella silvestris (strain DSM 15510 / CIP 108128 / LMG 27833 / NCIMB 13906 / BL2).